The following is a 620-amino-acid chain: UDP-glucose:protein N-beta-glucosyltransferase (620 aa).

The protein belongs to the glycosyltransferase 41 family.

Its subcellular location is the cytoplasm. It catalyses the reaction L-asparaginyl-[protein] + UDP-alpha-D-glucose = N(4)-(beta-D-glucosyl)-L-asparaginyl-[protein] + UDP + H(+). Its pathway is protein modification; protein glycosylation. Functionally, inverting glycosyltransferase that catalyzes the transfer of one glucose moiety from UDP-glucose to an asparagine residue in peptides and proteins containing the NX(S/T) motif, resulting in their modification with a beta-linked 1,N-glucose. Likely acts as a key component of a general protein glycosylation system. The sequence is that of UDP-glucose:protein N-beta-glucosyltransferase from Actinobacillus pleuropneumoniae serotype 5b (strain L20).